A 469-amino-acid polypeptide reads, in one-letter code: Bifunctional protein GlmU (469 aa).

The pyrophosphorylase stretch occupies residues M1 to R237. Residues L12–G15, K26, Q78, G83–T84, S105–D107, G144, E162, N177, and N235 each bind UDP-N-acetyl-alpha-D-glucosamine. D107 lines the Mg(2+) pocket. N235 is a binding site for Mg(2+). The linker stretch occupies residues Q238–A258. An N-acetyltransferase region spans residues G259–K469. Positions 341 and 359 each coordinate UDP-N-acetyl-alpha-D-glucosamine. Catalysis depends on H371, which acts as the Proton acceptor. Positions 374 and 385 each coordinate UDP-N-acetyl-alpha-D-glucosamine. Acetyl-CoA is bound by residues A388, N394 to Y395, S413, A431, and R448.

The protein in the N-terminal section; belongs to the N-acetylglucosamine-1-phosphate uridyltransferase family. This sequence in the C-terminal section; belongs to the transferase hexapeptide repeat family. As to quaternary structure, homotrimer. Mg(2+) is required as a cofactor.

Its subcellular location is the cytoplasm. The enzyme catalyses alpha-D-glucosamine 1-phosphate + acetyl-CoA = N-acetyl-alpha-D-glucosamine 1-phosphate + CoA + H(+). It catalyses the reaction N-acetyl-alpha-D-glucosamine 1-phosphate + UTP + H(+) = UDP-N-acetyl-alpha-D-glucosamine + diphosphate. It participates in nucleotide-sugar biosynthesis; UDP-N-acetyl-alpha-D-glucosamine biosynthesis; N-acetyl-alpha-D-glucosamine 1-phosphate from alpha-D-glucosamine 6-phosphate (route II): step 2/2. Its pathway is nucleotide-sugar biosynthesis; UDP-N-acetyl-alpha-D-glucosamine biosynthesis; UDP-N-acetyl-alpha-D-glucosamine from N-acetyl-alpha-D-glucosamine 1-phosphate: step 1/1. It functions in the pathway bacterial outer membrane biogenesis; LPS lipid A biosynthesis. In terms of biological role, catalyzes the last two sequential reactions in the de novo biosynthetic pathway for UDP-N-acetylglucosamine (UDP-GlcNAc). The C-terminal domain catalyzes the transfer of acetyl group from acetyl coenzyme A to glucosamine-1-phosphate (GlcN-1-P) to produce N-acetylglucosamine-1-phosphate (GlcNAc-1-P), which is converted into UDP-GlcNAc by the transfer of uridine 5-monophosphate (from uridine 5-triphosphate), a reaction catalyzed by the N-terminal domain. The protein is Bifunctional protein GlmU of Koribacter versatilis (strain Ellin345).